The following is a 255-amino-acid chain: uncharacterized protein (255 aa).

Residues 1 to 23 (MKRLNKLVLGINLLFLVISITAG) form the signal peptide. A lipid anchor (N-palmitoyl cysteine) is attached at Cys24. The S-diacylglycerol cysteine moiety is linked to residue Cys24.

This sequence belongs to the staphylococcal tandem lipoprotein family.

It localises to the cell membrane. This is an uncharacterized protein from Staphylococcus aureus (strain MRSA252).